The chain runs to 114 residues: uncharacterized protein (114 aa).

To E.coli YggL.

This is an uncharacterized protein from Haemophilus influenzae (strain ATCC 51907 / DSM 11121 / KW20 / Rd).